The chain runs to 376 residues: UPF0754 membrane protein SSP0953 (376 aa).

Transmembrane regions (helical) follow at residues 4-24 and 356-376; these read FLVI…TNVI and FLGF…AIFV.

It belongs to the UPF0754 family.

The protein resides in the cell membrane. The protein is UPF0754 membrane protein SSP0953 of Staphylococcus saprophyticus subsp. saprophyticus (strain ATCC 15305 / DSM 20229 / NCIMB 8711 / NCTC 7292 / S-41).